The sequence spans 324 residues: Acetyl-coenzyme A carboxylase carboxyl transferase subunit alpha (324 aa).

One can recognise a CoA carboxyltransferase C-terminal domain in the interval 37–291; the sequence is ILEEKLENLE…DLMIQKTFQQ (255 aa).

It belongs to the AccA family. Acetyl-CoA carboxylase is a heterohexamer composed of biotin carboxyl carrier protein (AccB), biotin carboxylase (AccC) and two subunits each of ACCase subunit alpha (AccA) and ACCase subunit beta (AccD).

The protein resides in the cytoplasm. The catalysed reaction is N(6)-carboxybiotinyl-L-lysyl-[protein] + acetyl-CoA = N(6)-biotinyl-L-lysyl-[protein] + malonyl-CoA. The protein operates within lipid metabolism; malonyl-CoA biosynthesis; malonyl-CoA from acetyl-CoA: step 1/1. Component of the acetyl coenzyme A carboxylase (ACC) complex. First, biotin carboxylase catalyzes the carboxylation of biotin on its carrier protein (BCCP) and then the CO(2) group is transferred by the carboxyltransferase to acetyl-CoA to form malonyl-CoA. The sequence is that of Acetyl-coenzyme A carboxylase carboxyl transferase subunit alpha from Bacillus cereus (strain ATCC 14579 / DSM 31 / CCUG 7414 / JCM 2152 / NBRC 15305 / NCIMB 9373 / NCTC 2599 / NRRL B-3711).